Reading from the N-terminus, the 406-residue chain is MANPKLVLAYSGGLDTSVAIKWLQERGYDVIACCLDLGEGKDLDFVKEKALKVGAIKSYVIDVKDEFANEYALIALQANALYEGKYPLVSALSRPLIAKKLVEIAELEGAVAVAHGCTGKGNDQVRFEVSIKALNPDLDVIAPVREWSWSREEEIEYAKKHGIPIPVDLDSPFSIDQNLWGRSNECGILEDPWAAPPEEAYELTASLENAPDVPDVIEIGFEQGVPVTLNGKAYPLAQMILELNAIAGKHGVGRIDHVENRLVGIKSREVYECPGAMTLIKAHKELEDLTLVREVAHFKPLIEQKIAEVIYNGLWFSPLKDALVAFLKETQKNVTGVVRVKLFKGHAIVEGRKSPFSLYDEKLATYTSEDEFDHQAAVGFISLYGLPTKVNSIVNKQNKSSVSTGQ.

Residue 9-17 (AYSGGLDTS) coordinates ATP. Tyrosine 86 serves as a coordination point for L-citrulline. Residue glycine 116 coordinates ATP. Residues threonine 118, asparagine 122, and aspartate 123 each coordinate L-aspartate. Residue asparagine 122 coordinates L-citrulline. L-citrulline contacts are provided by arginine 126, serine 174, serine 183, glutamate 259, and tyrosine 271.

Belongs to the argininosuccinate synthase family. Type 1 subfamily. As to quaternary structure, homotetramer.

It is found in the cytoplasm. It carries out the reaction L-citrulline + L-aspartate + ATP = 2-(N(omega)-L-arginino)succinate + AMP + diphosphate + H(+). The protein operates within amino-acid biosynthesis; L-arginine biosynthesis; L-arginine from L-ornithine and carbamoyl phosphate: step 2/3. This chain is Argininosuccinate synthase, found in Geobacillus thermodenitrificans (strain NG80-2).